The following is a 1445-amino-acid chain: Protein HUA2-LIKE 1 (1445 aa).

Residues 20–77 (LGDLVLAKVKGFPAWPAKIGQPEDWNQAPDPKKHFVQFYGTGEIGFVTPPDIQPFTSE) enclose the PWWP domain. 7 disordered regions span residues 133–197 (KYLN…SPDP), 211–302 (TCTD…DLNI), 319–356 (FENE…SKRL), 409–439 (EHTS…SDSD), 460–491 (DDDD…ANAS), 641–685 (GIPK…TSTP), and 797–835 (LTPS…SLSG). Polar residues-rich tracts occupy residues 173–187 (QDSS…SPSS) and 211–225 (TCTD…NLVN). Composition is skewed to basic and acidic residues over residues 228–257 (RIIR…RAAT), 274–293 (GQDH…ESSD), and 331–350 (DESK…DQKQ). Polar residues-rich tracts occupy residues 660–673 (RVSS…NQRS) and 797–814 (LTPS…QAGT). Residues 838-979 (EAAISRDTFE…RYIGDLGASG (142 aa)) form the CID domain. The disordered stretch occupies residues 1110–1203 (PATTCATELP…SLPLQPGFAP (94 aa)). Over residues 1124–1170 (GSPPLPHESPPSPPPQPPSSPPPPSSPPQLAPAPPPSDHCLPPPTAP) the composition is skewed to pro residues.

Expressed throughout young primordia, and vegetative and reproductive apices.

It is found in the nucleus. Its function is as follows. Probable transcription factor that acts with partial redundancy with HULK2 and HULK3. Plays diverse and essential roles in the control of plant development, physiology and flowering time. The sequence is that of Protein HUA2-LIKE 1 from Arabidopsis thaliana (Mouse-ear cress).